An 863-amino-acid chain; its full sequence is Phycobiliprotein ApcE (863 aa).

Cys178 contacts (2R,3E)-phycocyanobilin. 3 PBS-linker domains span residues 235–414, 473–652, and 671–852; these read DLQG…RFQK, PIEN…KLQP, and NNII…FILM.

The protein belongs to the phycobilisome linker protein family. In terms of processing, contains one covalently linked bilin chromophore. This protein autochromophorylates (Potential).

It is found in the plastid. The protein resides in the chloroplast thylakoid membrane. Functionally, this protein is postulated to act both as terminal energy acceptor and as a linker polypeptide that stabilizes the phycobilisome architecture. May have intrinsic bilin lyase activity. This Galdieria sulphuraria (Red alga) protein is Phycobiliprotein ApcE (apcE).